The chain runs to 476 residues: WASH complex subunit 1 (476 aa).

A required for WASH complex assembly region spans residues Met1–Arg54. 2 disordered regions span residues Ser273–Asp412 and Gly427–Ser476. Residues Thr284–Asp296 show a composition bias toward polar residues. The segment covering Leu302–Pro333 has biased composition (pro residues). The tract at residues Gln354–Ser476 is VCA. One can recognise a WH2 domain in the interval Gly366 to Val388. A compositionally biased stretch (basic and acidic residues) spans Ser387–Gln403. The span at Gly467 to Ser476 shows a compositional bias: acidic residues.

The protein belongs to the WASH1 family. In terms of assembly, component of the WASH complex.

Its subcellular location is the early endosome membrane. The protein localises to the recycling endosome membrane. In terms of biological role, acts as a nucleation-promoting factor at the surface of endosomes, where it recruits and activates the Arp2/3 complex to induce actin polymerization, playing a key role in the fission of tubules that serve as transport intermediates during endosome sorting. This is WASH complex subunit 1 from Gallus gallus (Chicken).